A 512-amino-acid polypeptide reads, in one-letter code: ATP synthase subunit alpha (512 aa).

169 to 176 (GDRQTGKT) serves as a coordination point for ATP.

The protein belongs to the ATPase alpha/beta chains family. In terms of assembly, F-type ATPases have 2 components, CF(1) - the catalytic core - and CF(0) - the membrane proton channel. CF(1) has five subunits: alpha(3), beta(3), gamma(1), delta(1), epsilon(1). CF(0) has four main subunits: a(1), b(1), b'(1) and c(9-12).

Its subcellular location is the cell inner membrane. It carries out the reaction ATP + H2O + 4 H(+)(in) = ADP + phosphate + 5 H(+)(out). In terms of biological role, produces ATP from ADP in the presence of a proton gradient across the membrane. The alpha chain is a regulatory subunit. The polypeptide is ATP synthase subunit alpha (Cereibacter sphaeroides (strain ATCC 17025 / ATH 2.4.3) (Rhodobacter sphaeroides)).